Here is a 194-residue protein sequence, read N- to C-terminus: Chromophore lyase CpcT/CpeT 1 (194 aa).

Belongs to the CpcT/CpeT biliprotein lyase family.

Covalently attaches a chromophore to Cys residue(s) of phycobiliproteins. In Microcystis aeruginosa (strain NIES-843 / IAM M-2473), this protein is Chromophore lyase CpcT/CpeT 1.